The sequence spans 103 residues: Conantokin-Br (103 aa).

Positions 1–21 are cleaved as a signal peptide; it reads MQLYTYLYLLVPLVTFHLILG. A propeptide spanning residues 22–79 is cleaved from the precursor; sequence TGTLDHGGALTERRSTDATALKPEPVLQKSAARSTDDNGKDRLTQMKRILKKRGKNAR. The disordered stretch occupies residues 34–64; that stretch reads RRSTDATALKPEPVLQKSAARSTDDNGKDRL. Residues 55-64 are compositionally biased toward basic and acidic residues; it reads STDDNGKDRL. Residues Glu-82, Glu-83, Glu-89, and Glu-93 each carry the 4-carboxyglutamate modification. Positions 89 and 93 each coordinate a divalent metal cation.

It belongs to the conotoxin B superfamily. Ca(2+) is required as a cofactor. The cofactor is Mg(2+). Expressed by the venom duct.

It is found in the secreted. Conantokins inhibit N-methyl-D-aspartate (NMDA) receptors. This toxin inhibits NR2 subunits N-methyl-D-aspartate (NMDA) receptor-mediated calcium influx in central nervous system neurons in the following order of preference: NR2B/GRIN2B (IC(50)=0.14 uM), NR2D/GRIN2D (IC(50)=0.31 uM), NR2A/GRIN2A (IC(50)=0.68 uM) and NR2C/GRIN2A (IC(50)=4.9 uM), when tested on rat receptors. This is Conantokin-Br from Conus sulcatus (Sulcate cone).